A 1108-amino-acid chain; its full sequence is Valine--tRNA ligase, mitochondrial 1 (1108 aa).

A mitochondrion-targeting transit peptide spans 1–46 (MSLLFLRRAKPLFVSCCSATHSRSSFLSPTLTNQLVRSFHGSRTMS). The span at 57 to 93 (ELERKKKKEEKAKEKELKKQKALEKERLAELKAKQAK) shows a compositional bias: basic and acidic residues. Residues 57-138 (ELERKKKKEE…RKRLSSQMAK (82 aa)) are disordered. Residues 177 to 187 (PNVTGALHIGH) carry the 'HIGH' region motif. The 'KMSKS' region motif lies at 695–699 (KMSKS). Residue K698 coordinates ATP. The stretch at 1032-1064 (AINTEAEQEKIRNKIGELQKQKEKLQKMMSVST) forms a coiled coil.

This sequence belongs to the class-I aminoacyl-tRNA synthetase family.

The protein localises to the mitochondrion. Its subcellular location is the cytoplasm. It localises to the cytosol. The catalysed reaction is tRNA(Val) + L-valine + ATP = L-valyl-tRNA(Val) + AMP + diphosphate. Required for embryo development and seed viability. This is Valine--tRNA ligase, mitochondrial 1 from Arabidopsis thaliana (Mouse-ear cress).